Here is a 232-residue protein sequence, read N- to C-terminus: MEKLYEGKAKEVYSTEKADEYIIRYKDDATAGNGEKKATIAGKGELNLAITTMIFEMLEKNGIKTHYIETINNTDMRVKKVTIMPLEVIVRNITAGSFAKRYGVEEGRVLNQPTFELSYKDDDLGDPLMCEDHAIALGVITKEEYDYLRKETLKINELLKEFFLKINLKLVDFKIEFGKTDDGQILLADEISPDTCRLWDKDTNKKLDKDIFRRDLGDLTEGYKEVLNRMRG.

Belongs to the SAICAR synthetase family.

The catalysed reaction is 5-amino-1-(5-phospho-D-ribosyl)imidazole-4-carboxylate + L-aspartate + ATP = (2S)-2-[5-amino-1-(5-phospho-beta-D-ribosyl)imidazole-4-carboxamido]succinate + ADP + phosphate + 2 H(+). The protein operates within purine metabolism; IMP biosynthesis via de novo pathway; 5-amino-1-(5-phospho-D-ribosyl)imidazole-4-carboxamide from 5-amino-1-(5-phospho-D-ribosyl)imidazole-4-carboxylate: step 1/2. In Finegoldia magna (strain ATCC 29328 / DSM 20472 / WAL 2508) (Peptostreptococcus magnus), this protein is Phosphoribosylaminoimidazole-succinocarboxamide synthase.